The primary structure comprises 489 residues: MSAEVTHTGQHPETGALTRRIMGVETEYGITCMDGEVRRLRPDEIAKYLFRPVVDKYSSSNIFIPNASRLYLDVGSHPEYATAECDSLTQLINAEKAGDVIVNRMAVEAEAALAREGIGGQVYLFKNNVDSIGNSYGCHENYLVRREVSLKALGRRLMPFLITRQLISGAGMIQHPNPMSKGEGFPLGYCISQRADHVWEGVSSATTRSRPIINTRDEPHADSHRYRRLHVIVGDANMAEPTIALKVGSTLLVLEMIEADFGLPDMELSNDIESIREIARDQTGRIPLKLKDGTTRSALEIQQVVFDHARRWLDHRVESRGTSNEEMARVLDLWGRMLSAIETQDFSQVDQEIDWVIKKKLLDRYQTRGNLGLDDPRLAQIDLTYHDIRPGRGLFSVLQNRGMITRWTTDEAINHAVDHAPETTRAHLRGRILKAADKLGAPVTVDWMRHKVNRPDPQLVELSDPFSPVDAEVDALIAYMEAHAETYRT.

A Mg(2+)-binding site is contributed by Glu25. Arg69 serves as a coordination point for ATP. Tyr71 serves as a coordination point for Mg(2+). Asp73 serves as the catalytic Proton acceptor. Glu79 is a Mg(2+) binding site. The ATP site is built by Thr82 and Trp447.

The protein belongs to the Pup ligase/Pup deamidase family. Pup-conjugating enzyme subfamily.

The enzyme catalyses ATP + [prokaryotic ubiquitin-like protein]-L-glutamate + [protein]-L-lysine = ADP + phosphate + N(6)-([prokaryotic ubiquitin-like protein]-gamma-L-glutamyl)-[protein]-L-lysine.. Its pathway is protein degradation; proteasomal Pup-dependent pathway. The protein operates within protein modification; protein pupylation. Catalyzes the covalent attachment of the prokaryotic ubiquitin-like protein modifier Pup to the proteasomal substrate proteins, thereby targeting them for proteasomal degradation. This tagging system is termed pupylation. The ligation reaction involves the side-chain carboxylate of the C-terminal glutamate of Pup and the side-chain amino group of a substrate lysine. In Corynebacterium efficiens (strain DSM 44549 / YS-314 / AJ 12310 / JCM 11189 / NBRC 100395), this protein is Pup--protein ligase.